A 188-amino-acid chain; its full sequence is Elongation factor P (188 aa).

Residue lysine 34 is modified to N6-(3,6-diaminohexanoyl)-5-hydroxylysine.

Belongs to the elongation factor P family. May be beta-lysylated on the epsilon-amino group of Lys-34 by the combined action of EpmA and EpmB, and then hydroxylated on the C5 position of the same residue by EpmC (if this protein is present). Lysylation is critical for the stimulatory effect of EF-P on peptide-bond formation. The lysylation moiety may extend toward the peptidyltransferase center and stabilize the terminal 3-CCA end of the tRNA. Hydroxylation of the C5 position on Lys-34 may allow additional potential stabilizing hydrogen-bond interactions with the P-tRNA.

The protein localises to the cytoplasm. Its pathway is protein biosynthesis; polypeptide chain elongation. Its function is as follows. Involved in peptide bond synthesis. Alleviates ribosome stalling that occurs when 3 or more consecutive Pro residues or the sequence PPG is present in a protein, possibly by augmenting the peptidyl transferase activity of the ribosome. Modification of Lys-34 is required for alleviation. The sequence is that of Elongation factor P from Vibrio cholerae serotype O1 (strain ATCC 39541 / Classical Ogawa 395 / O395).